The following is a 462-amino-acid chain: WD repeat-containing protein WRAP73 (462 aa).

4 WD repeats span residues 46 to 86, 89 to 129, 176 to 210, and 221 to 260; these read TCLD…WHCK, EGSA…VSYI, TDTQDLTGIEWAPNGCVLAAWDTCLEYKVLLYSLD, and EWSLGIKSVAWSPSSQFLAIGSYDGKVRLLNHVTWKMITE. Residue Ser281 is modified to Phosphoserine. WD repeat units follow at residues 328 to 369 and 371 to 410; these read NPRM…LFVV and EHMSPVRSFQWDPQQPRLAICTGGSKVYLWSPAGCVSVQV.

As to quaternary structure, interacts with SSX2IP. Ubiquitous.

The protein resides in the cytoplasm. Its subcellular location is the cytoskeleton. The protein localises to the microtubule organizing center. It is found in the centrosome. The SSX2IP:WRAP73 complex is proposed to act as regulator of spindle anchoring at the mitotic centrosome. Required for the centrosomal localization of SSX2IP and normal mitotic bipolar spindle morphology. Required for the targeting of centriole satellite proteins to centrosomes such as of PCM1, SSX2IP, CEP290 and PIBF1/CEP90. Required for ciliogenesis and involved in the removal of the CEP97:CCP110 complex from the mother centriole. Involved in ciliary vesicle formation at the mother centriole and required for the docking of vesicles to the basal body during ciliogenesis; may promote docking of RAB8A- and ARL13B-containing vesicles. This Mus musculus (Mouse) protein is WD repeat-containing protein WRAP73 (Wrap73).